The primary structure comprises 817 residues: Disks large homolog 3 (817 aa).

N-acetylmethionine occurs at positions 1 and 2. A disordered region spans residues 33 to 101 (WQVPDPYGPG…GKSTPKLNGS (69 aa)). Residues 40–53 (GPGGGNGASAGYGG) show a composition bias toward gly residues. Positions 57 to 69 (QTLPSQAGATPTP) are enriched in polar residues. 3 consecutive PDZ domains span residues 130–217 (EEIV…VRRR), 226–311 (EVNL…KVAK), and 379–465 (DFTR…VAQY). Phosphoserine is present on Ser-139. Residues 501 to 571 (KRSLYVRALF…PSKKRVEKKE (71 aa)) enclose the SH3 domain. The 176-residue stretch at 627–802 (ARPVIILGPM…IYNKIKQIIE (176 aa)) folds into the Guanylate kinase-like domain. The residue at position 673 (Tyr-673) is a Phosphotyrosine.

The protein belongs to the MAGUK family. As to quaternary structure, interacts through its PDZ domains with NETO1, GRIN2B and SYNGAP1. Interacts through its guanylate kinase-like domain with DLGAP1, DLGAP2, DLGAP3 and DLGAP4. Interacts with FLTP/C1orf192. Interacts through its PDZ domains with APC. Interacts through its first two PDZ domains with ERBB4. Interacts through its third PDZ domain with NLGN1, and probably with NLGN2 and NLGN3. Interacts with FRMPD4 (via C-terminus). Interacts with LRFN1, LRFN2 and LRFN4. Interacts with DGKI (via PDZ-binding motif).

Functionally, required for learning most likely through its role in synaptic plasticity following NMDA receptor signaling. The polypeptide is Disks large homolog 3 (DLG3) (Homo sapiens (Human)).